An 83-amino-acid chain; its full sequence is uncharacterized protein (83 aa).

The chain crosses the membrane as a helical span at residues 50 to 70; it reads IMVFLGEAWIILIPFAIFCII.

This sequence belongs to the plectrovirus ORF7 family.

It localises to the host membrane. This is an uncharacterized protein from Spiroplasma melliferum (SpV1).